Here is a 397-residue protein sequence, read N- to C-terminus: Potassium channel subfamily K member 4 (397 aa).

Topologically, residues 1–3 (MRS) are cytoplasmic. A helical membrane pass occupies residues 4–24 (TTLLALLALVLLYLVSGALVF). Over 25-88 (QALEQPHEQQ…WTNSSNHSSA (64 aa)) the chain is Extracellular. The N-linked (GlcNAc...) asparagine glycan is linked to N81. The helical intramembrane region spans 89 to 103 (WNLGSAFFFSGTIIT). Residues T104, I105, G106, and Y107 each coordinate K(+). The interval 104–109 (TIGYGN) is selectivity filter 1. The stretch at 104–110 (TIGYGNI) is an intramembrane region. The Extracellular portion of the chain corresponds to 111–118 (ALHTDAGR). The helical transmembrane segment at 119 to 151 (LFCIFYALVGIPLFGMLLAGVGDRLGSSLRRGI) threads the bilayer. At 152–173 (GHIEAVFLKWHVPPGLVRMLSA) the chain is on the cytoplasmic side. A helical transmembrane segment spans residues 174–195 (VLFLLIGCLLFVLTPTFVFSYM). Residues 196 to 200 (ESWSK) are Extracellular-facing. Residues 201–214 (LEAIYFVIVTLTTV) constitute an intramembrane region (helical). Residues T213, V214, G215, and F216 each coordinate K(+). The selectivity filter 2 stretch occupies residues 213-218 (TVGFGD). The stretch at 215 to 220 (GFGDYV) is an intramembrane region. Residues 221–234 (PGDGTGQNSPAYQP) are Extracellular-facing. Residues 235–261 (LVWFWILFGLAYFASVLTTIGNWLRAV) traverse the membrane as a helical segment. Topologically, residues 262 to 397 (SRRTRAEMGG…GRLRDKAVPV (136 aa)) are cytoplasmic. The segment covering 282–292 (TVTARVTQRTG) has biased composition (polar residues). The tract at residues 282–397 (TVTARVTQRT…GRLRDKAVPV (116 aa)) is disordered. Positions 369–388 (PRGRRRPNPTKKPSRPRGPG) are enriched in basic residues.

It belongs to the two pore domain potassium channel (TC 1.A.1.8) family. Homodimer; disulfide-linked. Forms heterodimers with other 2-pore domain K(+) channel subunits, such as KCNK2 and KCNK10. As to expression, detected in brain, and at much lower levels in liver, skeletal muscle and testis.

Its subcellular location is the cell membrane. The protein localises to the cell projection. It is found in the axon. The enzyme catalyses K(+)(in) = K(+)(out). It carries out the reaction Rb(+)(in) = Rb(+)(out). The catalysed reaction is Cs(+)(in) = Cs(+)(out). Activated by various stimuli including intracellular basic pH, mechanical stretch and heat and polyunsaturated fatty acids such as arachidonic acid. K(+) channel that conducts voltage-dependent outward rectifying currents upon membrane depolarization. Voltage sensing is coupled to K(+) electrochemical gradient in an 'ion flux gating' mode where outward but not inward ion flow opens the gate. Converts to voltage-independent 'leak' conductance mode upon stimulation by various stimuli including mechanical membrane stretch, basic pH, heat and lipids. Homo- and heterodimerizes to form functional channels with distinct regulatory and gating properties. At trigeminal A-beta afferent nerves, the heterodimer of KCNK2/TREK-1 and KCNK4/TRAAK is mostly coexpressed at nodes of Ranvier where it conducts voltage-independent mechanosensitive and thermosensitive currents, allowing rapid action potential repolarization, high speed and high frequence saltatory conduction on myelinated nerves to ensure prompt sensory responses. Permeable to other monovalent cations such as Rb(+) and Cs(+). The protein is Potassium channel subfamily K member 4 of Rattus norvegicus (Rat).